Consider the following 201-residue polypeptide: Adenylyl-sulfate kinase (201 aa).

An ATP-binding site is contributed by 35–42 (GLSGSGKS). Residue serine 109 is the Phosphoserine intermediate of the active site.

It belongs to the APS kinase family.

The enzyme catalyses adenosine 5'-phosphosulfate + ATP = 3'-phosphoadenylyl sulfate + ADP + H(+). It participates in sulfur metabolism; hydrogen sulfide biosynthesis; sulfite from sulfate: step 2/3. In terms of biological role, catalyzes the synthesis of activated sulfate. In Bacteroides thetaiotaomicron (strain ATCC 29148 / DSM 2079 / JCM 5827 / CCUG 10774 / NCTC 10582 / VPI-5482 / E50), this protein is Adenylyl-sulfate kinase.